A 157-amino-acid polypeptide reads, in one-letter code: Small ribosomal subunit protein uS7 (157 aa).

The protein belongs to the universal ribosomal protein uS7 family. As to quaternary structure, part of the 30S ribosomal subunit. Contacts proteins S9 and S11.

One of the primary rRNA binding proteins, it binds directly to 16S rRNA where it nucleates assembly of the head domain of the 30S subunit. Is located at the subunit interface close to the decoding center, probably blocks exit of the E-site tRNA. The protein is Small ribosomal subunit protein uS7 of Pseudomonas fluorescens (strain Pf0-1).